A 382-amino-acid polypeptide reads, in one-letter code: MSLNVFWFLPTHGDGHYLGSTEGARSVDYGYLQQIAQAADRLGFGGVLIPTGRSCEDSWLVAASLIPVTQRLKFLVALRPGIISPTLAARQAATLDRLSNGRALFNLVTGGDPDELAAEGLHLNHEERYEASAEFTHIWRKVLEGETVDFNGKHIQVKGAKLLYPPVQQPRPPLYFGGSSAAAQDLAADQVEMYLTWGEPPAQVKEKIAEVRAKAAAKGRQVRFGIRLHVIVRETTEEAWRAADRLIANLDEKTIADAQQAFARFDSVGQQRMAALHGGKKDNLEISPNLWAGVGLVRGGAGTALVGDGPTVAARMQEYADLGIDTFILSGYPHLEEAYRVGELLFPHLDLVENQAPAPRRPAKAQGEVVANIYIPQKASQS.

This sequence belongs to the SsuD family. As to quaternary structure, homotetramer.

The enzyme catalyses an alkanesulfonate + FMNH2 + O2 = an aldehyde + FMN + sulfite + H2O + 2 H(+). Functionally, catalyzes the desulfonation of aliphatic sulfonates. This Serratia proteamaculans (strain 568) protein is Alkanesulfonate monooxygenase.